A 592-amino-acid chain; its full sequence is Threonine dehydratase biosynthetic, chloroplastic (592 aa).

The N-terminal 91 residues, 1–91 (MNSVQLPTAQ…NEAENGSIAE (91 aa)), are a transit peptide targeting the chloroplast. Lys141 carries the post-translational modification N6-(pyridoxal phosphate)lysine. 2 consecutive ACT-like domains span residues 419 to 490 (AVLA…NLTT) and 512 to 583 (VLCR…LVSD).

This sequence belongs to the serine/threonine dehydratase family. Pyridoxal 5'-phosphate serves as cofactor.

The protein resides in the plastid. Its subcellular location is the chloroplast. The enzyme catalyses L-threonine = 2-oxobutanoate + NH4(+). The protein operates within amino-acid biosynthesis; L-isoleucine biosynthesis; 2-oxobutanoate from L-threonine: step 1/1. With respect to regulation, allosterically inhibited by isoleucine. Strain GM11b is isoleucine feedback insensitive and is resistant to the antimetabolite L-O-methylthreonine. In terms of biological role, catalyzes the formation of alpha-ketobutyrate from threonine in a two-step reaction. The first step is a dehydration of threonine, followed by rehydration and liberation of ammonia. This Arabidopsis thaliana (Mouse-ear cress) protein is Threonine dehydratase biosynthetic, chloroplastic (OMR1).